Reading from the N-terminus, the 235-residue chain is Phosphoribosylaminoimidazole-succinocarboxamide synthase (235 aa).

The protein belongs to the SAICAR synthetase family.

It catalyses the reaction 5-amino-1-(5-phospho-D-ribosyl)imidazole-4-carboxylate + L-aspartate + ATP = (2S)-2-[5-amino-1-(5-phospho-beta-D-ribosyl)imidazole-4-carboxamido]succinate + ADP + phosphate + 2 H(+). Its pathway is purine metabolism; IMP biosynthesis via de novo pathway; 5-amino-1-(5-phospho-D-ribosyl)imidazole-4-carboxamide from 5-amino-1-(5-phospho-D-ribosyl)imidazole-4-carboxylate: step 1/2. The polypeptide is Phosphoribosylaminoimidazole-succinocarboxamide synthase (Chlorobium chlorochromatii (strain CaD3)).